We begin with the raw amino-acid sequence, 902 residues long: Aconitate hydratase A (902 aa).

Residues cysteine 441, cysteine 507, and cysteine 510 each coordinate [4Fe-4S] cluster.

This sequence belongs to the aconitase/IPM isomerase family. Monomer. [4Fe-4S] cluster is required as a cofactor.

The catalysed reaction is citrate = D-threo-isocitrate. The enzyme catalyses (2S,3R)-3-hydroxybutane-1,2,3-tricarboxylate = 2-methyl-cis-aconitate + H2O. It functions in the pathway carbohydrate metabolism; tricarboxylic acid cycle; isocitrate from oxaloacetate: step 2/2. Its pathway is organic acid metabolism; propanoate degradation. Its function is as follows. Involved in the catabolism of short chain fatty acids (SCFA) via the tricarboxylic acid (TCA)(acetyl degradation route) and probably the 2-methylcitrate cycle I (propionate degradation route). Catalyzes the reversible isomerization of citrate to isocitrate via cis-aconitate. Also able to catalyze the hydration of cis-homoaconitate to yield (R)-homocitrate, but with a lower efficiency. Could catalyze the hydration of 2-methyl-cis-aconitate to yield (2R,3S)-2-methylisocitrate. The apo form of AcnA functions as a RNA-binding regulatory protein. The protein is Aconitate hydratase A (acoA) of Thermus thermophilus (strain ATCC 27634 / DSM 579 / HB8).